The sequence spans 583 residues: 2-succinyl-5-enolpyruvyl-6-hydroxy-3-cyclohexene-1-carboxylate synthase (583 aa).

It belongs to the TPP enzyme family. MenD subfamily. As to quaternary structure, homodimer. The cofactor is Mg(2+). Mn(2+) is required as a cofactor. Requires thiamine diphosphate as cofactor.

It catalyses the reaction isochorismate + 2-oxoglutarate + H(+) = 5-enolpyruvoyl-6-hydroxy-2-succinyl-cyclohex-3-ene-1-carboxylate + CO2. It functions in the pathway quinol/quinone metabolism; 1,4-dihydroxy-2-naphthoate biosynthesis; 1,4-dihydroxy-2-naphthoate from chorismate: step 2/7. It participates in quinol/quinone metabolism; menaquinone biosynthesis. Its function is as follows. Catalyzes the thiamine diphosphate-dependent decarboxylation of 2-oxoglutarate and the subsequent addition of the resulting succinic semialdehyde-thiamine pyrophosphate anion to isochorismate to yield 2-succinyl-5-enolpyruvyl-6-hydroxy-3-cyclohexene-1-carboxylate (SEPHCHC). The sequence is that of 2-succinyl-5-enolpyruvyl-6-hydroxy-3-cyclohexene-1-carboxylate synthase from Roseiflexus sp. (strain RS-1).